The following is a 92-amino-acid chain: Small ribosomal subunit protein uS19c (92 aa).

The protein belongs to the universal ribosomal protein uS19 family.

It is found in the plastid. The protein resides in the chloroplast. In terms of biological role, protein S19 forms a complex with S13 that binds strongly to the 16S ribosomal RNA. The protein is Small ribosomal subunit protein uS19c of Nicotiana tomentosiformis (Tobacco).